Here is a 450-residue protein sequence, read N- to C-terminus: MTRRYFGTDGIRGQSNVFPMTPDLAMKVGIAVGTILRRGHHRHRVVIGKDTRLSGYMLETALVAGFTAAGLDVFLLGPIPTPAVAMLTRSLRADIGVMVSASHNPFADNGIKLFGPDGYKLSDELEAEIEALLNQEAPLPLARAEDIGRAKRVDGDIYRYIEFVKRTLPRDVTLSGLRIAIDCANGAAYKVAPTALWELGAEVVTIGNEPNGLNINLECGSTHPAALQKKVHEVRADIGIALDGDADRVIIVDETGAIVDGDQLMAVIAESWANDQTLKGGGIVATVMSNLGLERFLGGKGLTLARTKVGDRHVVEHMRQNHYNIGGEQSGHIVLSDFGTTGDGLVAALQILAAVKRTGKTVSQICHRFDPVPQLLRNVRISGGKPLEDSFVRQAIADAESELARNGRLVIRPSGTEPLIRVMAEGDDRSQIERIVNDLIGVIANSREAA.

The active-site Phosphoserine intermediate is S102. Mg(2+) contacts are provided by S102, D243, D245, and D247. Residue S102 is modified to Phosphoserine.

Belongs to the phosphohexose mutase family. The cofactor is Mg(2+). Post-translationally, activated by phosphorylation.

It carries out the reaction alpha-D-glucosamine 1-phosphate = D-glucosamine 6-phosphate. Catalyzes the conversion of glucosamine-6-phosphate to glucosamine-1-phosphate. In Allorhizobium ampelinum (strain ATCC BAA-846 / DSM 112012 / S4) (Agrobacterium vitis (strain S4)), this protein is Phosphoglucosamine mutase.